A 197-amino-acid chain; its full sequence is Cell division protein SepF (197 aa).

Residues 15 to 91 (DEEEVESPEE…PPSKSNGKNV (77 aa)) are disordered. Residues 22 to 31 (PEERQRRVVQ) are compositionally biased toward basic and acidic residues. The span at 37–47 (TNNVQQNQPQQ) shows a compositional bias: low complexity. Polar residues-rich tracts occupy residues 48–58 (SERSYSNQSKL) and 78–91 (RMNQ…GKNV).

It belongs to the SepF family. Homodimer. Interacts with FtsZ.

The protein resides in the cytoplasm. Its function is as follows. Cell division protein that is part of the divisome complex and is recruited early to the Z-ring. Probably stimulates Z-ring formation, perhaps through the cross-linking of FtsZ protofilaments. Its function overlaps with FtsA. The sequence is that of Cell division protein SepF from Staphylococcus haemolyticus (strain JCSC1435).